Consider the following 464-residue polypeptide: 3-isopropylmalate dehydratase large subunit (464 aa).

Cysteine 345, cysteine 405, and cysteine 408 together coordinate [4Fe-4S] cluster.

The protein belongs to the aconitase/IPM isomerase family. LeuC type 1 subfamily. As to quaternary structure, heterodimer of LeuC and LeuD. [4Fe-4S] cluster serves as cofactor.

It carries out the reaction (2R,3S)-3-isopropylmalate = (2S)-2-isopropylmalate. The protein operates within amino-acid biosynthesis; L-leucine biosynthesis; L-leucine from 3-methyl-2-oxobutanoate: step 2/4. Its function is as follows. Catalyzes the isomerization between 2-isopropylmalate and 3-isopropylmalate, via the formation of 2-isopropylmaleate. The polypeptide is 3-isopropylmalate dehydratase large subunit (Bacteroides fragilis (strain ATCC 25285 / DSM 2151 / CCUG 4856 / JCM 11019 / LMG 10263 / NCTC 9343 / Onslow / VPI 2553 / EN-2)).